The following is a 329-amino-acid chain: Ferredoxin--NAD(P)(+) reductase CarAd (329 aa).

A 2Fe-2S ferredoxin-type domain is found at 2–92 (YQLKIEGQAP…DLRIKVAVQD (91 aa)). [2Fe-2S] cluster-binding residues include Cys35, Cys40, Cys43, and Cys76. An FAD-binding FR-type domain is found at 100–200 (ISRMEAEVVE…TGPMGTSFFR (101 aa)).

In terms of assembly, monomer. Carbazole 1,9a-dioxygenase complex consists of a terminal oxygenase component CarAa, a ferredoxin reductase component CarAd and a ferredoxin component CarAc. Requires [2Fe-2S] cluster as cofactor. FAD is required as a cofactor.

The catalysed reaction is 2 reduced [2Fe-2S]-[ferredoxin] + NAD(+) + H(+) = 2 oxidized [2Fe-2S]-[ferredoxin] + NADH. It catalyses the reaction 2 reduced [2Fe-2S]-[ferredoxin] + NADP(+) + H(+) = 2 oxidized [2Fe-2S]-[ferredoxin] + NADPH. Its function is as follows. Part of the multicomponent carbazole 1,9a-dioxygenase (CARDO), that converts carbazole (CAR) into 2-aminobiphenyl-2,3-diol. It can use both NAD and NADP as electron donors, but NAD is supposed to be the physiological electron donor. This Metapseudomonas resinovorans (Pseudomonas resinovorans) protein is Ferredoxin--NAD(P)(+) reductase CarAd (carAd).